The primary structure comprises 409 residues: Pyruvate dehydrogenase E1 component subunit alpha, mitochondrial (409 aa).

Threonine 6 carries the phosphothreonine modification. Residues histidine 109, tyrosine 135, arginine 136, alanine 174, glycine 182, valine 184, aspartate 213, glycine 214, alanine 215, asparagine 242, and tyrosine 244 each contribute to the pyruvate site. Thiamine diphosphate-binding residues include tyrosine 135 and arginine 136. The thiamine diphosphate site is built by glycine 182, valine 184, aspartate 213, glycine 214, alanine 215, and asparagine 242. Aspartate 213 contacts Mg(2+). Positions 242 and 244 each coordinate Mg(2+). Tyrosine 306 is subject to Phosphotyrosine. Histidine 309 lines the thiamine diphosphate pocket. Serine 310 and serine 312 each carry phosphoserine.

As to quaternary structure, tetramer of 2 alpha and 2 beta subunits. Requires thiamine diphosphate as cofactor. Mg(2+) serves as cofactor.

It is found in the mitochondrion matrix. The enzyme catalyses N(6)-[(R)-lipoyl]-L-lysyl-[protein] + pyruvate + H(+) = N(6)-[(R)-S(8)-acetyldihydrolipoyl]-L-lysyl-[protein] + CO2. Its activity is regulated as follows. E1 activity is regulated by phosphorylation (inactivation) and dephosphorylation (activation) of the alpha subunit. In terms of biological role, the pyruvate dehydrogenase complex catalyzes the overall conversion of pyruvate to acetyl-CoA and CO(2). It contains multiple copies of three enzymatic components: pyruvate dehydrogenase (E1), dihydrolipoamide acetyltransferase (E2) and lipoamide dehydrogenase (E3). The protein is Pyruvate dehydrogenase E1 component subunit alpha, mitochondrial (pda1) of Schizosaccharomyces pombe (strain 972 / ATCC 24843) (Fission yeast).